Reading from the N-terminus, the 428-residue chain is 3-phosphoshikimate 1-carboxyvinyltransferase (428 aa).

Residues Lys22, Ser23, and Arg27 each contribute to the 3-phosphoshikimate site. Lys22 contacts phosphoenolpyruvate. Phosphoenolpyruvate-binding residues include Gly96 and Arg124. 3-phosphoshikimate-binding residues include Ser169, Ser170, Gln171, Ser197, Asp313, Asn336, and Lys340. Gln171 provides a ligand contact to phosphoenolpyruvate. The active-site Proton acceptor is the Asp313. The phosphoenolpyruvate site is built by Arg344, Arg386, and Lys411.

This sequence belongs to the EPSP synthase family. In terms of assembly, monomer.

It localises to the cytoplasm. It catalyses the reaction 3-phosphoshikimate + phosphoenolpyruvate = 5-O-(1-carboxyvinyl)-3-phosphoshikimate + phosphate. Its pathway is metabolic intermediate biosynthesis; chorismate biosynthesis; chorismate from D-erythrose 4-phosphate and phosphoenolpyruvate: step 6/7. Functionally, catalyzes the transfer of the enolpyruvyl moiety of phosphoenolpyruvate (PEP) to the 5-hydroxyl of shikimate-3-phosphate (S3P) to produce enolpyruvyl shikimate-3-phosphate and inorganic phosphate. The sequence is that of 3-phosphoshikimate 1-carboxyvinyltransferase from Photorhabdus laumondii subsp. laumondii (strain DSM 15139 / CIP 105565 / TT01) (Photorhabdus luminescens subsp. laumondii).